We begin with the raw amino-acid sequence, 61 residues long: MTQAKTFKVTLVKSLIGRKENHIASARGLGLRKINHTVEVLDTPENRGMANKIYYMVKIEG.

The protein belongs to the universal ribosomal protein uL30 family. As to quaternary structure, part of the 50S ribosomal subunit.

The sequence is that of Large ribosomal subunit protein uL30 from Francisella tularensis subsp. tularensis (strain FSC 198).